Here is a 360-residue protein sequence, read N- to C-terminus: Alanine racemase (360 aa).

K34 functions as the Proton acceptor; specific for D-alanine in the catalytic mechanism. K34 bears the N6-(pyridoxal phosphate)lysine mark. Residue R129 coordinates substrate. Catalysis depends on Y254, which acts as the Proton acceptor; specific for L-alanine. Residue M302 coordinates substrate.

This sequence belongs to the alanine racemase family. Requires pyridoxal 5'-phosphate as cofactor.

The enzyme catalyses L-alanine = D-alanine. It functions in the pathway amino-acid biosynthesis; D-alanine biosynthesis; D-alanine from L-alanine: step 1/1. In terms of biological role, catalyzes the interconversion of L-alanine and D-alanine. May also act on other amino acids. The chain is Alanine racemase (alr) from Pectobacterium carotovorum subsp. carotovorum (strain PC1).